Here is a 302-residue protein sequence, read N- to C-terminus: Probable 5-dehydro-4-deoxyglucarate dehydratase (302 aa).

It belongs to the DapA family.

It carries out the reaction 5-dehydro-4-deoxy-D-glucarate + H(+) = 2,5-dioxopentanoate + CO2 + H2O. It functions in the pathway carbohydrate acid metabolism; D-glucarate degradation; 2,5-dioxopentanoate from D-glucarate: step 2/2. This is Probable 5-dehydro-4-deoxyglucarate dehydratase from Rhizobium rhizogenes (strain K84 / ATCC BAA-868) (Agrobacterium radiobacter).